Here is a 145-residue protein sequence, read N- to C-terminus: Lymphocyte antigen 6 complex locus protein G5c (145 aa).

The signal sequence occupies residues 1-38 (MSGLAASWSLKPLGPHGVTQALCAVLLAVLVTMNVVLG). The region spanning 55 to 145 (LHCYRCLLET…NPKNRKNTMH (91 aa)) is the UPAR/Ly6 domain. 5 disulfide bridges follow: Cys-57-Cys-84, Cys-60-Cys-69, Cys-76-Cys-102, Cys-111-Cys-128, and Cys-129-Cys-134. Asn-91 is a glycosylation site (N-linked (GlcNAc...) asparagine).

Forms oligomers. N-glycosylated. As to expression, expression restricted to the caput of epididymis. Detected only from day 24 postnatum.

Its subcellular location is the secreted. Functionally, may have a role in hematopoietic cell differentiation. The chain is Lymphocyte antigen 6 complex locus protein G5c (Ly6g5c) from Rattus norvegicus (Rat).